The primary structure comprises 345 residues: D-fructose 1,6-bisphosphatase class 2/sedoheptulose 1,7-bisphosphatase (345 aa).

Mn(2+) is bound by residues aspartate 33, glutamate 57, aspartate 97, and glutamate 100. Substrate-binding positions include 100-102 (EGT), tyrosine 131, 176-178 (RDR), and 198-200 (DGD). Residue glutamate 225 participates in Mn(2+) binding.

Belongs to the FBPase class 2 family. Homotetramer. Mn(2+) serves as cofactor.

The enzyme catalyses beta-D-fructose 1,6-bisphosphate + H2O = beta-D-fructose 6-phosphate + phosphate. The catalysed reaction is D-sedoheptulose 1,7-bisphosphate + H2O = D-sedoheptulose 7-phosphate + phosphate. It functions in the pathway carbohydrate biosynthesis; Calvin cycle. Catalyzes the hydrolysis of fructose 1,6-bisphosphate (Fru 1,6-P2) and sedoheptulose 1,7-bisphosphate (Sed 1,7-P2) to fructose 6-phosphate and sedoheptulose 7-phosphate, respectively. The chain is D-fructose 1,6-bisphosphatase class 2/sedoheptulose 1,7-bisphosphatase from Nostoc sp. (strain PCC 7120 / SAG 25.82 / UTEX 2576).